The sequence spans 136 residues: uncharacterized protein (136 aa).

This is an uncharacterized protein from Leptolyngbya boryana (Plectonema boryanum).